Reading from the N-terminus, the 483-residue chain is Cobyric acid synthase (483 aa).

Positions 252–439 constitute a GATase cobBQ-type domain; the sequence is KLKVVVPVLT…LHGFLDSEAV (188 aa). Residue cysteine 333 is the Nucleophile of the active site. The active site involves histidine 431.

Belongs to the CobB/CobQ family. CobQ subfamily.

Its pathway is cofactor biosynthesis; adenosylcobalamin biosynthesis. Catalyzes amidations at positions B, D, E, and G on adenosylcobyrinic A,C-diamide. NH(2) groups are provided by glutamine, and one molecule of ATP is hydrogenolyzed for each amidation. The sequence is that of Cobyric acid synthase from Vibrio vulnificus (strain CMCP6).